A 674-amino-acid polypeptide reads, in one-letter code: Pentatricopeptide repeat-containing protein At4g17616 (674 aa).

5 PPR repeats span residues 409–443 (GSRL…GYPM), 444–478 (ELAT…GLIT), 519–553 (MLYE…KIPP), 554–584 (TVQS…IKRN), and 593–627 (TQDL…DMYN).

This sequence belongs to the PPR family. P subfamily.

This chain is Pentatricopeptide repeat-containing protein At4g17616, found in Arabidopsis thaliana (Mouse-ear cress).